Here is a 361-residue protein sequence, read N- to C-terminus: Transcription factor MafA (361 aa).

At Ser-14 the chain carries Phosphoserine. A Glycyl lysine isopeptide (Lys-Gly) (interchain with G-Cter in SUMO2) cross-link involves residue Lys-32. Disordered stretches follow at residues 40–105 and 175–228; these read RFCH…VGGA and GGAD…AGHH. The span at 46 to 76 shows a compositional bias: low complexity; that stretch reads PPGSLSSTPLSTPCSSVPSSPSFCAPSPGTG. Ser-49 is modified (phosphoserine). Residues Thr-53 and Thr-57 each carry the phosphothreonine modification. 2 positions are modified to phosphoserine: Ser-61 and Ser-65. Residues 183-211 show a composition bias toward basic residues; that stretch reads GHHHGAHHTAHHHHSAHHHHHHHHHHGGS. Positions 212–226 are enriched in gly residues; the sequence is GHHGGGAGHGGGGAG. Positions 262–287 are basic motif; sequence RLKQKRRTLKNRGYAQSCRFKRVQQR. The bZIP domain maps to 262-325; sequence RLKQKRRTLK…DLYKEKYEKL (64 aa). The interval 290–311 is leucine-zipper; sequence LESEKCQLQSQVEQLKLEVGRL. The segment at 324–361 is disordered; the sequence is KLAGRGGPGGAGGAGFPREPSPAQAGPGAAKGAPDFFL. Positions 327-338 are enriched in gly residues; it reads GRGGPGGAGGAG. The segment covering 345–361 has biased composition (low complexity); that stretch reads PAQAGPGAAKGAPDFFL.

The protein belongs to the bZIP family. In terms of assembly, forms homodimers. Monomers and dimers are able to bind DNA, but the off-rate is faster for monomers. Interacts with NEUROD1 and PDX1. May interact with MAFB, FOS, JUN and PCAF. Ubiquitinated, leading to its degradation by the proteasome. Post-translationally, phosphorylated at tyrosines.

It localises to the nucleus. Transcription factor that activates insulin gene expression. Acts synergistically with NEUROD1/BETA2 and PDX1. Binds the insulin enhancer C1/RIPE3b element. Binds to consensus TRE-type MARE 5'-TGCTGACTCAGCA-3' DNA sequence. This chain is Transcription factor MafA (Mafa), found in Rattus norvegicus (Rat).